Here is a 466-residue protein sequence, read N- to C-terminus: Probable Xaa-Pro aminopeptidase pepP (466 aa).

Residues Asp264, Asp275, Glu398, and Glu438 each contribute to the Mn(2+) site.

Belongs to the peptidase M24B family. Requires Mn(2+) as cofactor.

It catalyses the reaction Release of any N-terminal amino acid, including proline, that is linked to proline, even from a dipeptide or tripeptide.. Functionally, catalyzes the removal of a penultimate prolyl residue from the N-termini of peptides. The chain is Probable Xaa-Pro aminopeptidase pepP (pepP) from Aspergillus clavatus (strain ATCC 1007 / CBS 513.65 / DSM 816 / NCTC 3887 / NRRL 1 / QM 1276 / 107).